Here is a 171-residue protein sequence, read N- to C-terminus: LIM domain transcription factor LMO4-A (171 aa).

The span at 1 to 19 (MVNNRSSESTTTAVSSNGS) shows a compositional bias: polar residues. The disordered stretch occupies residues 1 to 21 (MVNNRSSESTTTAVSSNGSPP). 2 LIM zinc-binding domains span residues 22-84 (KACA…LFGN) and 86-148 (GACN…GLLN).

As to expression, at the start of gastrulation (stage 10), expressed in the mesodermal marginal zone. Shortly after (stage 11), expression is down-regulated in the dorsal most region. During neurulation, expressed in the neural plate and ventral epidermis. At late neurula stages, also expressed more rostrally, and then in the brain, migrating neural crests and ventral epidermis.

Functionally, acts as a positive cofactor of GATA transcription factors to establish the identity of the ventral mesoderm during gastrulation. Down-regulation in the dorsal mesoderm is necessary for the proper formation of this territory since, when present, lmo4 may bind ldb1 and restrict the availability of this cofactor for Spemman organizer transcription factors. At neurula stages, suppresses primary neuron differentiation and modulates gene expression at the Isthmic Organizer of the midbrain-hindbrain boundary. The protein is LIM domain transcription factor LMO4-A (lmo4-a) of Xenopus laevis (African clawed frog).